A 98-amino-acid polypeptide reads, in one-letter code: NADH-ubiquinone oxidoreductase chain 4L (98 aa).

The next 3 membrane-spanning stretches (helical) occupy residues 1-21 (MSLTYMNMFMAFTISLLGLLM), 29-49 (SLLCLEGMMLSLFVMMTMAIL), and 61-81 (IILLVFAACEAALGLSLLVMV).

The protein belongs to the complex I subunit 4L family. Core subunit of respiratory chain NADH dehydrogenase (Complex I) which is composed of 45 different subunits.

The protein resides in the mitochondrion inner membrane. The catalysed reaction is a ubiquinone + NADH + 5 H(+)(in) = a ubiquinol + NAD(+) + 4 H(+)(out). Core subunit of the mitochondrial membrane respiratory chain NADH dehydrogenase (Complex I) which catalyzes electron transfer from NADH through the respiratory chain, using ubiquinone as an electron acceptor. Part of the enzyme membrane arm which is embedded in the lipid bilayer and involved in proton translocation. This is NADH-ubiquinone oxidoreductase chain 4L (MT-ND4L) from Vampyressa melissa (Melissa's yellow-eared bat).